The sequence spans 686 residues: Disintegrin and metalloproteinase domain-containing protein 17 homolog (686 aa).

The N-terminal stretch at 1–21 (MKIQDRSLLIFLVLGILKSDA) is a signal peptide. The propeptide occupies 22–177 (FNTRVKRHAP…RRAIAIPSDR (156 aa)). Residues asparagine 59, asparagine 206, and asparagine 262 are each glycosylated (N-linked (GlcNAc...) asparagine). At 178–637 (RKDVLNVKRN…TGGVLEFIKT (460 aa)) the chain is on the extracellular side. The Peptidase M12B domain occupies 187–445 (NRCTLKLVAD…KWESCFQEEM (259 aa)). Cystine bridges form between cysteine 328/cysteine 440 and cysteine 394/cysteine 424. Residue histidine 370 coordinates Zn(2+). Residue glutamate 371 is part of the active site. Residues histidine 374 and histidine 380 each coordinate Zn(2+). The region spanning 446 to 535 (TSFCGNGIVE…ECPSAPPVRD (90 aa)) is the Disintegrin domain. A glycan (N-linked (GlcNAc...) asparagine) is linked at asparagine 501. Cysteine 506 and cysteine 527 are oxidised to a cystine. The N-linked (GlcNAc...) asparagine glycan is linked to asparagine 581. Residues 638–658 (HIVVIAIIFFTLIFVGIYKIV) traverse the membrane as a helical segment. Over 659–686 (KYGENFTEKVTHKTAGGCRSVFVKADVN) the chain is Cytoplasmic.

Zn(2+) serves as cofactor.

The protein resides in the cell membrane. Metalloprotease. Acts together with protease sup-17 to facilitate lin-12/Notch signaling during developmental cell fate decision, including anchor cell/ventral uterine precursor cell decision. By modulating glp-1/Notch signaling, plays a role in germline development. The protein is Disintegrin and metalloproteinase domain-containing protein 17 homolog of Caenorhabditis elegans.